The primary structure comprises 128 residues: Large ribosomal subunit protein mL55 (128 aa).

The N-terminal 33 residues, methionine 1 to alanine 33, are a transit peptide targeting the mitochondrion. Phosphoserine is present on serine 85.

Belongs to the mitochondrion-specific ribosomal protein mL55 family. As to quaternary structure, component of the mitochondrial large ribosomal subunit (mt-LSU). Mature mammalian 55S mitochondrial ribosomes consist of a small (28S) and a large (39S) subunit. The 28S small subunit contains a 12S ribosomal RNA (12S mt-rRNA) and 30 different proteins. The 39S large subunit contains a 16S rRNA (16S mt-rRNA), a copy of mitochondrial valine transfer RNA (mt-tRNA(Val)), which plays an integral structural role, and 52 different proteins.

The protein localises to the mitochondrion. This is Large ribosomal subunit protein mL55 (MRPL55) from Homo sapiens (Human).